Here is a 203-residue protein sequence, read N- to C-terminus: Thymidylate kinase (203 aa).

14–21 (GGEGIGKS) contributes to the ATP binding site.

This sequence belongs to the thymidylate kinase family.

The catalysed reaction is dTMP + ATP = dTDP + ADP. Phosphorylation of dTMP to form dTDP in both de novo and salvage pathways of dTTP synthesis. In Rickettsia rickettsii (strain Iowa), this protein is Thymidylate kinase.